The primary structure comprises 246 residues: Large ribosomal subunit protein uL3 (246 aa).

N5-methylglutamine is present on Q151.

This sequence belongs to the universal ribosomal protein uL3 family. Part of the 50S ribosomal subunit. Forms a cluster with proteins L14 and L19. Methylated by PrmB.

Its function is as follows. One of the primary rRNA binding proteins, it binds directly near the 3'-end of the 23S rRNA, where it nucleates assembly of the 50S subunit. The chain is Large ribosomal subunit protein uL3 from Bartonella bacilliformis (strain ATCC 35685 / KC583 / Herrer 020/F12,63).